We begin with the raw amino-acid sequence, 713 residues long: Polyribonucleotide nucleotidyltransferase (713 aa).

Mg(2+)-binding residues include aspartate 493 and aspartate 499. One can recognise a KH domain in the interval 560 to 619; sequence PRMITIKINPEKIRDVIGKGGSVIRALTEETGTTIDISDDGVVTIASTNSEGMAEAKKRI. Positions 629–697 constitute an S1 motif domain; it reads GHVYEGTVLK…EKGRVRLSAK (69 aa).

This sequence belongs to the polyribonucleotide nucleotidyltransferase family. Mg(2+) is required as a cofactor.

It is found in the cytoplasm. The catalysed reaction is RNA(n+1) + phosphate = RNA(n) + a ribonucleoside 5'-diphosphate. Functionally, involved in mRNA degradation. Catalyzes the phosphorolysis of single-stranded polyribonucleotides processively in the 3'- to 5'-direction. The chain is Polyribonucleotide nucleotidyltransferase from Burkholderia pseudomallei (strain 1106a).